The sequence spans 104 residues: NADH-quinone oxidoreductase subunit K (104 aa).

3 helical membrane passes run 4–24 (VPASAYLTLAIILFCIGLFGA), 31–51 (VIVLVCIELMLNAANLNLVAF), and 67–87 (LFTMAVAAAEAALGLAILIAL).

Belongs to the complex I subunit 4L family. As to quaternary structure, NDH-1 is composed of 14 different subunits. Subunits NuoA, H, J, K, L, M, N constitute the membrane sector of the complex.

The protein localises to the cell membrane. The catalysed reaction is a quinone + NADH + 5 H(+)(in) = a quinol + NAD(+) + 4 H(+)(out). Functionally, NDH-1 shuttles electrons from NADH, via FMN and iron-sulfur (Fe-S) centers, to quinones in the respiratory chain. The immediate electron acceptor for the enzyme in this species is believed to be a menaquinone. Couples the redox reaction to proton translocation (for every two electrons transferred, four hydrogen ions are translocated across the cytoplasmic membrane), and thus conserves the redox energy in a proton gradient. In Bacillus cereus (strain ATCC 14579 / DSM 31 / CCUG 7414 / JCM 2152 / NBRC 15305 / NCIMB 9373 / NCTC 2599 / NRRL B-3711), this protein is NADH-quinone oxidoreductase subunit K.